The sequence spans 372 residues: Actin-related protein 2/3 complex subunit 1B (372 aa).

WD repeat units lie at residues phenylalanine 6–valine 45, glutamate 50–threonine 89, arginine 94–lysine 135, proline 140–arginine 179, serine 242–serine 280, and leucine 324–lysine 367.

The protein belongs to the WD repeat ARPC1 family. In terms of assembly, component of the Arp2/3 complex composed of ACTR2/ARP2, ACTR3/ARP3, ARPC1B/p41-ARC, ARPC2/p34-ARC, ARPC3/p21-ARC, ARPC4/p20-ARC and ARPC5/p16-ARC.

The protein localises to the cytoplasm. It localises to the cytoskeleton. It is found in the nucleus. Component of the Arp2/3 complex, a multiprotein complex that mediates actin polymerization upon stimulation by nucleation-promoting factor (NPF). The Arp2/3 complex mediates the formation of branched actin networks in the cytoplasm, providing the force for cell motility. In addition to its role in the cytoplasmic cytoskeleton, the Arp2/3 complex also promotes actin polymerization in the nucleus, thereby regulating gene transcription and repair of damaged DNA. The Arp2/3 complex promotes homologous recombination (HR) repair in response to DNA damage by promoting nuclear actin polymerization, leading to drive motility of double-strand breaks (DSBs). In Bos taurus (Bovine), this protein is Actin-related protein 2/3 complex subunit 1B (ARPC1B).